A 446-amino-acid polypeptide reads, in one-letter code: C-type lectin domain family 18 member A (446 aa).

The first 26 residues, 1 to 26 (MLHPETSPGRGHLLAVLLALLGTAWA), serve as a signal peptide directing secretion. The SCP domain maps to 52–182 (LSLHNRLRSW…AAIEAFVCAY (131 aa)). The N-linked (GlcNAc...) asparagine glycan is linked to N144. Positions 228-261 (PRNPCRMSCQNHGRLNISTCHCHCPPGYTGRYCQ) constitute an EGF-like domain. Disulfide bonds link C236-C249, C251-C260, C327-C432, and C408-C424. Residues 306–433 (IDGDCFMVSS…CKTRNRYICQ (128 aa)) enclose the C-type lectin domain.

In terms of processing, N-glycosylated. As to expression, dectected in all cell lines tested and in peripheral blood cells.

The protein localises to the secreted. The protein resides in the endoplasmic reticulum. It is found in the golgi apparatus. Its subcellular location is the endosome. Its function is as follows. Binds polysaccharides in a Ca(2+)-independent manner with a preferentially binding to fucoidan, beta-glucans and galactans. In Homo sapiens (Human), this protein is C-type lectin domain family 18 member A (CLEC18A).